We begin with the raw amino-acid sequence, 182 residues long: ATP synthase subunit delta (182 aa).

It belongs to the ATPase delta chain family. In terms of assembly, F-type ATPases have 2 components, F(1) - the catalytic core - and F(0) - the membrane proton channel. F(1) has five subunits: alpha(3), beta(3), gamma(1), delta(1), epsilon(1). F(0) has three main subunits: a(1), b(2) and c(10-14). The alpha and beta chains form an alternating ring which encloses part of the gamma chain. F(1) is attached to F(0) by a central stalk formed by the gamma and epsilon chains, while a peripheral stalk is formed by the delta and b chains.

The protein resides in the cell inner membrane. Functionally, f(1)F(0) ATP synthase produces ATP from ADP in the presence of a proton or sodium gradient. F-type ATPases consist of two structural domains, F(1) containing the extramembraneous catalytic core and F(0) containing the membrane proton channel, linked together by a central stalk and a peripheral stalk. During catalysis, ATP synthesis in the catalytic domain of F(1) is coupled via a rotary mechanism of the central stalk subunits to proton translocation. Its function is as follows. This protein is part of the stalk that links CF(0) to CF(1). It either transmits conformational changes from CF(0) to CF(1) or is implicated in proton conduction. The sequence is that of ATP synthase subunit delta from Sulfurihydrogenibium azorense (strain DSM 15241 / OCM 825 / Az-Fu1).